Reading from the N-terminus, the 471-residue chain is 3-isopropylmalate dehydratase large subunit (471 aa).

Residues Cys-347, Cys-407, and Cys-410 each coordinate [4Fe-4S] cluster.

The protein belongs to the aconitase/IPM isomerase family. LeuC type 1 subfamily. In terms of assembly, heterodimer of LeuC and LeuD. Requires [4Fe-4S] cluster as cofactor.

It catalyses the reaction (2R,3S)-3-isopropylmalate = (2S)-2-isopropylmalate. Its pathway is amino-acid biosynthesis; L-leucine biosynthesis; L-leucine from 3-methyl-2-oxobutanoate: step 2/4. In terms of biological role, catalyzes the isomerization between 2-isopropylmalate and 3-isopropylmalate, via the formation of 2-isopropylmaleate. The chain is 3-isopropylmalate dehydratase large subunit from Geobacillus sp. (strain WCH70).